The following is a 160-amino-acid chain: Regulatory protein RecX (160 aa).

It belongs to the RecX family.

Its subcellular location is the cytoplasm. Its function is as follows. Modulates RecA activity. The polypeptide is Regulatory protein RecX (Xanthomonas oryzae pv. oryzae (strain MAFF 311018)).